A 2176-amino-acid chain; its full sequence is Protein eyes shut (2176 aa).

Residues 1–122 (MSNVHQFDTQ…NPNILLPTLR (122 aa)) are Cytoplasmic-facing. A helical membrane pass occupies residues 123–143 (ILARGLLLPALILAILVGSSQ). Residues 144–180 (AGFACLSNPCVFGVCIDGLNSSYSCYCIDGYTGIQCQ) form the EGF-like 1 domain. Residues 144–2176 (AGFACLSNPC…DLHGDEPLTV (2033 aa)) lie on the Extracellular side of the membrane. Disulfide bonds link cysteine 148–cysteine 158, cysteine 153–cysteine 168, cysteine 170–cysteine 179, cysteine 186–cysteine 197, cysteine 191–cysteine 206, cysteine 208–cysteine 217, cysteine 224–cysteine 235, cysteine 229–cysteine 244, cysteine 246–cysteine 255, cysteine 262–cysteine 276, cysteine 270–cysteine 286, cysteine 288–cysteine 297, cysteine 304–cysteine 315, cysteine 309–cysteine 324, cysteine 326–cysteine 335, cysteine 342–cysteine 353, cysteine 347–cysteine 362, cysteine 364–cysteine 373, cysteine 380–cysteine 392, cysteine 386–cysteine 401, and cysteine 403–cysteine 412. N-linked (GlcNAc...) asparagine glycosylation is present at asparagine 163. Positions 182-218 (NWDECWSSPCQNGGTCVDGVAYYNCTCPEGFSGSNCE) constitute an EGF-like 2; calcium-binding domain. An N-linked (GlcNAc...) asparagine glycan is attached at asparagine 205. Residues 220-256 (NVDECMSNPCQNGGLCRDRTNGYICTCQPGYLGSHCE) enclose the EGF-like 3; calcium-binding domain. One can recognise an EGF-like 4 domain in the interval 258 to 298 (DVAVCETGTGARCQHGGECIEGPGLEFTCDCPAGWHGRICQ). The EGF-like 5; calcium-binding domain maps to 300 to 336 (EINECASSPCQNGGVCVDKLAAYACACPMGYTGINCE). Positions 338–374 (EILICADNPCQNNALCLMEEGVPTCYCVPDYHGEKCE) constitute an EGF-like 6 domain. The 38-residue stretch at 376–413 (QYDECQLGPRCMNGGVCIDGVDTFSCSCPPLLTGMLCE) folds into the EGF-like 7; calcium-binding domain. Residue asparagine 425 is glycosylated (N-linked (GlcNAc...) asparagine). Composition is skewed to low complexity over residues 429 to 447 (PATQ…MAPP) and 482 to 502 (VTSV…VSVE). 5 disordered regions span residues 429–465 (PATQ…SRAS), 482–639 (VTSV…RPTA), 757–783 (RFTT…LPTP), 802–854 (LITT…VEIT), and 902–1014 (APPA…GVPE). Over residues 514 to 526 (GSHSISVEQTTAV) the composition is skewed to polar residues. Residues 548-560 (SASESETETEEEI) show a composition bias toward acidic residues. Low complexity-rich tracts occupy residues 564–582 (TTAR…ESPS) and 596–632 (TSAS…SEEV). Residues 757–775 (RFTTVQPPAGVTTTSPTED) are compositionally biased toward polar residues. Over residues 811–820 (THHHHHHHPH) the composition is skewed to basic residues. 2 stretches are compositionally biased toward pro residues: residues 904 to 922 (PATP…PSPP) and 930 to 955 (TLPP…PTPP). One can recognise an EGF-like 8 domain in the interval 1018–1054 (GDVDCIKLGCYNGGTCVTTSEGSRCVCRFDRQGPLCE). Disulfide bonds link cysteine 1022/cysteine 1033, cysteine 1027/cysteine 1042, and cysteine 1044/cysteine 1053. The Laminin G-like 1 domain maps to 1059–1266 (IRNAAFSGDS…GITECGSLAC (208 aa)). N-linked (GlcNAc...) asparagine glycans are attached at residues asparagine 1165, asparagine 1170, and asparagine 1176. Positions 1309-1346 (EISVCEDNPCQYGGTCVQFPGSGYLCLCPLGKHGHYCE) constitute an EGF-like 9 domain. 3 cysteine pairs are disulfide-bonded: cysteine 1313/cysteine 1324, cysteine 1318/cysteine 1334, and cysteine 1336/cysteine 1345. A Laminin G-like 2 domain is found at 1353-1549 (LPSFSGSVNG…GVGQCGTREC (197 aa)). A glycan (N-linked (GlcNAc...) asparagine) is linked at asparagine 1471. 2 EGF-like domains span residues 1545–1581 (GTRE…PLCA) and 1583–1621 (PTNP…KNCE). 6 cysteine pairs are disulfide-bonded: cysteine 1549–cysteine 1560, cysteine 1554–cysteine 1569, cysteine 1571–cysteine 1580, cysteine 1587–cysteine 1600, cysteine 1594–cysteine 1609, and cysteine 1611–cysteine 1620. Asparagine 1665 and asparagine 1861 each carry an N-linked (GlcNAc...) asparagine glycan. The Laminin G-like 3 domain maps to 1692 to 1879 (EKQRSFSPVP…NIRDCDGTAC (188 aa)). 2 consecutive EGF-like domains span residues 1875–1912 (DGTA…DRCE) and 1913–1946 (YSET…FYCE). Cystine bridges form between cysteine 1879–cysteine 1890, cysteine 1884–cysteine 1900, cysteine 1902–cysteine 1911, cysteine 1917–cysteine 1928, cysteine 1922–cysteine 1934, and cysteine 1936–cysteine 1945. Residues 1952–2166 (PTTPSFRGNS…TYQGENIGSC (215 aa)) enclose the Laminin G-like 4 domain. 3 N-linked (GlcNAc...) asparagine glycosylation sites follow: asparagine 1994, asparagine 2035, and asparagine 2099. A disordered region spans residues 2080-2101 (GGRSLGSTTPRSTLAGRRKNSS).

The protein belongs to the EYS family. As to expression, expressed from the beginning of rhabdomere biogenesis (48 hours after pupal formation), when it decorates the entire photoreceptor apical surface.

The protein localises to the membrane. It localises to the secreted. In terms of biological role, essential for the formation of matrix-filled interrhabdomeral space: critical for the formation of epithelial lumina in the retina. Acts together with prominin (prom) and the cell adhesion molecule chaoptin (chp) to choreograph the partitioning of rhabdomeres into an open system. This Drosophila melanogaster (Fruit fly) protein is Protein eyes shut.